Consider the following 318-residue polypeptide: L-lactate dehydrogenase (318 aa).

Residues valine 14, aspartate 35, lysine 40, and tyrosine 66 each contribute to the NAD(+) site. Substrate is bound by residues arginine 89 and 121–124 (NPVD). An NAD(+)-binding site is contributed by serine 144. 149-152 (DTAR) lines the substrate pocket. Catalysis depends on histidine 176, which acts as the Proton acceptor. Phosphotyrosine is present on tyrosine 220. Threonine 229 provides a ligand contact to substrate.

This sequence belongs to the LDH/MDH superfamily. LDH family. Homotetramer.

Its subcellular location is the cytoplasm. The enzyme catalyses (S)-lactate + NAD(+) = pyruvate + NADH + H(+). It participates in fermentation; pyruvate fermentation to lactate; (S)-lactate from pyruvate: step 1/1. In terms of biological role, catalyzes the conversion of lactate to pyruvate. The polypeptide is L-lactate dehydrogenase (Staphylococcus haemolyticus (strain JCSC1435)).